We begin with the raw amino-acid sequence, 179 residues long: Protein GrpE (179 aa).

Positions 1–29 (MQDQDKYAEQAASIEDPVTAEAASATTPT) are disordered.

The protein belongs to the GrpE family. Homodimer.

The protein resides in the cytoplasm. Its function is as follows. Participates actively in the response to hyperosmotic and heat shock by preventing the aggregation of stress-denatured proteins, in association with DnaK and GrpE. It is the nucleotide exchange factor for DnaK and may function as a thermosensor. Unfolded proteins bind initially to DnaJ; upon interaction with the DnaJ-bound protein, DnaK hydrolyzes its bound ATP, resulting in the formation of a stable complex. GrpE releases ADP from DnaK; ATP binding to DnaK triggers the release of the substrate protein, thus completing the reaction cycle. Several rounds of ATP-dependent interactions between DnaJ, DnaK and GrpE are required for fully efficient folding. This is Protein GrpE from Janthinobacterium sp. (strain Marseille) (Minibacterium massiliensis).